We begin with the raw amino-acid sequence, 234 residues long: Eosinophil granule major basic protein 2 (234 aa).

The N-terminal stretch at 1-15 (MKLLLLLALLVGAVS) is a signal peptide. A propeptide spans 16–115 (TRHLNVDTSS…VKFEGSPGCK (100 aa)) (acidic). Residues 26–96 (LQSLQGEESL…SSELDMGPED (71 aa)) form a disordered region. Ser69 is a glycosylation site (O-linked (Xyl...) (glycosaminoglycan) serine). The span at 71-94 (SEDDPEEEEEEKEMESSSELDMGP) shows a compositional bias: acidic residues. The C-type lectin domain occupies 133–234 (SVCQRCFRGN…GVRRAFSCSY (102 aa)). 2 disulfide bridges follow: Cys135–Cys232 and Cys209–Cys224.

Nitrated.

Its subcellular location is the cytoplasmic granule. Its function is as follows. MBP may play some important roles in the allergic reactions and inflammations, since MBP is capable of releasing histamine from mast cells and damaging the epithelial cells of bronchial tubes. Antiparasitic and antibiotic. The sequence is that of Eosinophil granule major basic protein 2 (MBP2) from Cavia porcellus (Guinea pig).